The sequence spans 92 residues: MTRSLKKGPFVDHHLVAKADKAVATKDKKPIKTWSRRSMVLPDFIGLTIAVHNGKQHVPVYITDQMVGHKLGEFALTRTFKGHPADKKVQKK.

This sequence belongs to the universal ribosomal protein uS19 family.

Its function is as follows. Protein S19 forms a complex with S13 that binds strongly to the 16S ribosomal RNA. The protein is Small ribosomal subunit protein uS19 of Albidiferax ferrireducens (strain ATCC BAA-621 / DSM 15236 / T118) (Rhodoferax ferrireducens).